Consider the following 460-residue polypeptide: Oxysterols receptor LXR-beta (460 aa).

The segment covering 1 to 14 (MSSPTTSSLDTPLP) has biased composition (low complexity). A disordered region spans residues 1-78 (MSSPTTSSLD…PERKRKKGPA (78 aa)). A transactivation AF-1; required for ligand-independent transactivation function region spans residues 1–85 (MSSPTTSSLD…GPAPKMLGHE (85 aa)). The segment covering 36 to 45 (EPWPGGPDPD) has biased composition (pro residues). Residues 84–161 (HELCRVCGDK…AGMREQCVLS (78 aa)) constitute a DNA-binding region (nuclear receptor). NR C4-type zinc fingers lie at residues 87-107 (CRVC…CEGC) and 125-149 (CRGG…LRKC). Positions 169 to 216 (KIRKQQQESQSQSQSPVGPQGSSSSASGPGASPGGSEAGSQGSGEGEG) are disordered. Over residues 175-198 (QESQSQSQSPVGPQGSSSSASGPG) the composition is skewed to low complexity. Gly residues predominate over residues 199–215 (ASPGGSEAGSQGSGEGE). The segment at 219–460 (LTAAQELMIQ…LLSEIWDVHE (242 aa)) is transactivation AF-2; required for ligand-dependent transactivation function; mediates interaction with CCAR2. The region spanning 222-460 (AQELMIQQLV…LLSEIWDVHE (239 aa)) is the NR LBD domain. Glycyl lysine isopeptide (Lys-Gly) (interchain with G-Cter in SUMO2) cross-links involve residues Lys-409 and Lys-447.

This sequence belongs to the nuclear hormone receptor family. NR1 subfamily. In terms of assembly, forms a heterodimer with RXR. Interacts with CCAR2 (via N-terminus) in a ligand-independent manner. Interacts (when sumoylated) with GPS2; interaction with GPS2 onto hepatic acute phase protein promoters prevents N-Cor corepressor complex dissociation. Interacts with ABCA12 and ABCA1; this interaction is required for ABCA1 localization to the cell surface and is necessary for its normal activity and stability. In terms of processing, sumoylated by SUMO2 at Lys-409 and Lys-447 during the hepatic acute phase response, leading to promote interaction with GPS2 and prevent N-Cor corepressor complex dissociation. In terms of tissue distribution, ubiquitous.

It localises to the nucleus. Nuclear receptor that exhibits a ligand-dependent transcriptional activation activity. Binds preferentially to double-stranded oligonucleotide direct repeats having the consensus half-site sequence 5'-AGGTCA-3' and 4-nt spacing (DR-4). Regulates cholesterol uptake through MYLIP-dependent ubiquitination of LDLR, VLDLR and LRP8; DLDLR and LRP8. Interplays functionally with RORA for the regulation of genes involved in liver metabolism. Induces LPCAT3-dependent phospholipid remodeling in endoplasmic reticulum (ER) membranes of hepatocytes, driving SREBF1 processing and lipogenesis. Via LPCAT3, triggers the incorporation of arachidonate into phosphatidylcholines of ER membranes, increasing membrane dynamics and enabling triacylglycerols transfer to nascent very low-density lipoprotein (VLDL) particles. Via LPCAT3 also counteracts lipid-induced ER stress response and inflammation, likely by modulating SRC kinase membrane compartmentalization and limiting the synthesis of lipid inflammatory mediators. Plays an anti-inflammatory role during the hepatic acute phase response by acting as a corepressor: inhibits the hepatic acute phase response by preventing dissociation of the N-Cor corepressor complex. The polypeptide is Oxysterols receptor LXR-beta (NR1H2) (Homo sapiens (Human)).